The chain runs to 276 residues: Undecaprenyl-diphosphatase 1 (276 aa).

The next 6 membrane-spanning stretches (helical) occupy residues 44–63 (ALAF…IWEY), 85–105 (VNLL…ADLI), 109–129 (LFNP…MLWA), 183–203 (AATE…AVYS), 214–234 (GDFA…MLAV), and 249–269 (FAWY…LGMI).

Belongs to the UppP family.

It is found in the cell inner membrane. It carries out the reaction di-trans,octa-cis-undecaprenyl diphosphate + H2O = di-trans,octa-cis-undecaprenyl phosphate + phosphate + H(+). Functionally, catalyzes the dephosphorylation of undecaprenyl diphosphate (UPP). Confers resistance to bacitracin. In Stutzerimonas stutzeri (strain A1501) (Pseudomonas stutzeri), this protein is Undecaprenyl-diphosphatase 1.